A 444-amino-acid chain; its full sequence is Exodeoxyribonuclease 7 large subunit (444 aa).

The protein belongs to the XseA family. Heterooligomer composed of large and small subunits.

The protein localises to the cytoplasm. It catalyses the reaction Exonucleolytic cleavage in either 5'- to 3'- or 3'- to 5'-direction to yield nucleoside 5'-phosphates.. Functionally, bidirectionally degrades single-stranded DNA into large acid-insoluble oligonucleotides, which are then degraded further into small acid-soluble oligonucleotides. In Hahella chejuensis (strain KCTC 2396), this protein is Exodeoxyribonuclease 7 large subunit.